A 480-amino-acid polypeptide reads, in one-letter code: Coronin-2B (480 aa).

WD repeat units lie at residues 29 to 77 (HCFD…GRIE), 78 to 127 (PNYP…RNMT), 128 to 170 (EALL…LDVG), 171 to 212 (EPVK…PRSG), 213 to 259 (RVLQ…EDLS), 260 to 305 (MPLI…TEKP), and 306 to 345 (YLSY…KLVT). The stretch at 436–479 (NELLRMFFRQQDEIRRLKEELAQKDIRIRQLQLELKNLRNSPKN) forms a coiled coil.

Belongs to the WD repeat coronin family. In terms of assembly, binds to F-actin and to vinculin. In terms of tissue distribution, expressed predominantly in brain.

The protein resides in the cytoplasm. It is found in the cytoskeleton. Functionally, may play a role in the reorganization of neuronal actin structure. The sequence is that of Coronin-2B (CORO2B) from Homo sapiens (Human).